A 143-amino-acid chain; its full sequence is Submaxillary gland androgen-regulated protein 2, isoform delta (143 aa).

Positions 1-22 (MKPLCLVFGLCVLIGCFLSSEC) are cleaved as a signal peptide. Disordered stretches follow at residues 28 to 52 (GQHDPTRPLSPSNPSSHFYPQPDPN) and 116 to 143 (VPRKKSNATPAANNFITTATAPNSTDSF). Polar residues-rich tracts occupy residues 36-45 (LSPSNPSSHF) and 122-143 (NATPAANNFITTATAPNSTDSF).

It localises to the secreted. Its function is as follows. May play a role in protection or detoxification. This chain is Submaxillary gland androgen-regulated protein 2, isoform delta (Smr2), found in Mus musculus (Mouse).